Here is a 427-residue protein sequence, read N- to C-terminus: Serine--tRNA ligase (427 aa).

Residue 231–233 (TAE) participates in L-serine binding. 262 to 264 (RSE) lines the ATP pocket. Position 285 (glutamate 285) interacts with L-serine. 349–352 (EISS) contributes to the ATP binding site. Serine 385 is an L-serine binding site.

The protein belongs to the class-II aminoacyl-tRNA synthetase family. Type-1 seryl-tRNA synthetase subfamily. In terms of assembly, homodimer. The tRNA molecule binds across the dimer.

The protein resides in the cytoplasm. The catalysed reaction is tRNA(Ser) + L-serine + ATP = L-seryl-tRNA(Ser) + AMP + diphosphate + H(+). The enzyme catalyses tRNA(Sec) + L-serine + ATP = L-seryl-tRNA(Sec) + AMP + diphosphate + H(+). It participates in aminoacyl-tRNA biosynthesis; selenocysteinyl-tRNA(Sec) biosynthesis; L-seryl-tRNA(Sec) from L-serine and tRNA(Sec): step 1/1. In terms of biological role, catalyzes the attachment of serine to tRNA(Ser). Is also able to aminoacylate tRNA(Sec) with serine, to form the misacylated tRNA L-seryl-tRNA(Sec), which will be further converted into selenocysteinyl-tRNA(Sec). The chain is Serine--tRNA ligase from Listeria innocua serovar 6a (strain ATCC BAA-680 / CLIP 11262).